The primary structure comprises 245 residues: Retrovirus-related Pol polyprotein from type-1 retrotransposable element R1 (245 aa).

Residues Leu-1–Ala-105 enclose the Reverse transcriptase domain. Residues Glu-106–Gln-245 form a nucleic acid-binding endonuclease region.

It catalyses the reaction DNA(n) + a 2'-deoxyribonucleoside 5'-triphosphate = DNA(n+1) + diphosphate. This is Retrovirus-related Pol polyprotein from type-1 retrotransposable element R1 from Popillia japonica (Japanese beetle).